A 2073-amino-acid polypeptide reads, in one-letter code: Non-reducing polyketide synthase cla3 (2073 aa).

The N-terminal acylcarrier protein transacylase domain (SAT) stretch occupies residues 9–242 (LLFGDYTEPW…EKLNIHALQH (234 aa)). The region spanning 363 to 793 (SGRIAIVGMS…GGNGCLLLEE (431 aa)) is the Ketosynthase family 3 (KS3) domain. Catalysis depends on for beta-ketoacyl synthase activity residues cysteine 538, histidine 673, and histidine 712. A malonyl-CoA:ACP transacylase (MAT) domain region spans residues 898–1198 (TFTGQGSQYA…KIMSTLDATG (301 aa)). The For acyl/malonyl transferase activity role is filled by serine 987. Residues 1276–1590 (STCAQYVITE…QNVILERLLG (315 aa)) are product template (PT) domain. The N-terminal hotdog fold stretch occupies residues 1279–1420 (AQYVITETKT…AGLESQWEKS (142 aa)). One can recognise a PKS/mFAS DH domain in the interval 1279–1586 (AQYVITETKT…FHRVQNVILE (308 aa)). The active-site Proton acceptor; for dehydratase activity is the histidine 1311. Residues 1439-1586 (QGHRIQRDIY…FHRVQNVILE (148 aa)) form a C-terminal hotdog fold region. The Proton donor; for dehydratase activity role is filled by aspartate 1500. Residues 1594-1637 (SSSVPAQASDPLRSKRSPQEARSLPGEAKTEKPGSTIATTSPVL) are disordered. The Carrier domain occupies 1641–1718 (KSEQGMFQAL…NLRCAFDEDV (78 aa)). Residue serine 1678 is modified to O-(pantetheine 4'-phosphoryl)serine. Residues 1721–1738 (EFTDSEVTSGTPNSSESV) are compositionally biased toward polar residues. A disordered region spans residues 1721-1786 (EFTDSEVTSG…GVLDDGSPQP (66 aa)). Residues 1747-1774 (PEEHAFKEPKDDSPLARRDMDNSNDRSL) are compositionally biased toward basic and acidic residues. A thioesterase (TE) domain region spans residues 1805-1950 (FLIADGSGSI…MQQHLRAIFK (146 aa)). Histidine 2058 (for thioesterase activity) is an active-site residue.

Its pathway is secondary metabolite biosynthesis. Functionally, highly reducing polyketide synthase; part of the gene cluster that mediates the biosynthesis of cladosporin, a tricyclic octaketide that acts as an antimalarial agent though inhibition of the Plasmodium falciparum lysyl-tRNA synthetase. The highly reducing polyketide synthase cla2 is responsible for biosynthesis up to the pentaketide stage, including of the tetrahydropyran (THP) ring, whereas the three subsequent ketide extensions with no reduction are catalyzed by the non-reducing polyketide synthase cla3. This Cladosporium cladosporioides protein is Non-reducing polyketide synthase cla3.